Reading from the N-terminus, the 1089-residue chain is GPI ethanolamine phosphate transferase 3, catalytic subunit (1089 aa).

A helical membrane pass occupies residues 4-24 (ASVLLFLAWVCFLFYAGIALF). Asparagine 268 is a glycosylation site (N-linked (GlcNAc...) asparagine). Transmembrane regions (helical) follow at residues 457-477 (LLAA…SPGF), 482-502 (LLLT…GLLG), 510-530 (LVLL…WKAW), 541-561 (TLFP…AVFF), 575-595 (FLLG…GQLL), 668-688 (LWYG…RLWL), 701-721 (MLFV…YWAL), 747-767 (VAGL…TVLV), 830-850 (SVYS…LLLL), 857-877 (LVFL…AAGI), 944-964 (FASH…PFLC), 1014-1034 (LKYL…ASIL), and 1048-1068 (FIFE…GIAL).

This sequence belongs to the PIGG/PIGN/PIGO family. PIGO subfamily. In terms of assembly, part of the ethanolamine phosphate transferase 3 complex composed by PIGO and PIGF. PIGF is required to stabilize PIGO.

It is found in the endoplasmic reticulum membrane. Its pathway is glycolipid biosynthesis; glycosylphosphatidylinositol-anchor biosynthesis. In terms of biological role, catalytic subunit of the ethanolamine phosphate transferase 3 complex that transfers an ethanolamine phosphate (EtNP) from a phosphatidylethanolamine (PE) to the 6-OH position of the third alpha-1,2-linked mannose of an alpha-D-Man-(1-&gt;2)-alpha-D-Man-(1-&gt;6)-2-PEtn-alpha-D-Man-(1-&gt;4)-alpha-D-GlcN-(1-&gt;6)-(1-radyl,2-acyl-sn-glycero-3-phospho)-2-acyl-inositol (also termed H6) intermediate to generate a 6-PEtn-alpha-D-Man-(1-&gt;2)-alpha-D-Man-(1-&gt;6)-2-PEtn-alpha-D-Man-(1-&gt;4)-alpha-D-GlcN-(1-&gt;6)-(1-radyl,2-acyl-sn-glycero-3-phospho)-2-acyl-inositol (also termed H7) and participates in the tenth step of the glycosylphosphatidylinositol-anchor biosynthesis. The polypeptide is GPI ethanolamine phosphate transferase 3, catalytic subunit (Homo sapiens (Human)).